Consider the following 62-residue polypeptide: Protein YhjR (62 aa).

In Escherichia coli (strain K12), this protein is Protein YhjR (yhjR).